Here is a 475-residue protein sequence, read N- to C-terminus: Flavin-dependent monooxygenase (475 aa).

This sequence belongs to the aromatic-ring hydroxylase family. Requires FAD as cofactor.

Its subcellular location is the cytoplasm. The enzyme catalyses a tetracycline + NADPH + O2 + H(+) = an 11a-hydroxytetracycline + NADP(+) + H2O. It catalyses the reaction tetracycline + NADPH + O2 + H(+) = 11a-hydroxytetracycline + NADP(+) + H2O. Its activity is regulated as follows. Inhibited by anhydrotetracycline. An FAD-requiring monooxygenase active on some tetracycline antibiotic derivatives, which leads to their inactivation. Hydroxylates carbon 11a of tetracycline and some analogs. Confers resistance to tetracycline and doxycycline via an oxidoreductase activity; probably monooxygenates the antibiotics. Does not act on tigecycline. The polypeptide is Flavin-dependent monooxygenase (Mycobacteroides abscessus (strain ATCC 19977 / DSM 44196 / CCUG 20993 / CIP 104536 / JCM 13569 / NCTC 13031 / TMC 1543 / L948) (Mycobacterium abscessus)).